The following is a 101-amino-acid chain: Signal recognition particle 19 kDa protein (101 aa).

Belongs to the SRP19 family. Part of the signal recognition particle protein translocation system, which is composed of SRP and FtsY. Archaeal SRP consists of a 7S RNA molecule of 300 nucleotides and two protein subunits: SRP54 and SRP19.

It is found in the cytoplasm. In terms of biological role, involved in targeting and insertion of nascent membrane proteins into the cytoplasmic membrane. Binds directly to 7S RNA and mediates binding of the 54 kDa subunit of the SRP. The protein is Signal recognition particle 19 kDa protein of Methanosarcina barkeri (strain Fusaro / DSM 804).